Reading from the N-terminus, the 510-residue chain is Maturase K (510 aa).

The protein belongs to the intron maturase 2 family. MatK subfamily.

It is found in the plastid. Its function is as follows. Usually encoded in the trnK tRNA gene intron. Probably assists in splicing its own and other chloroplast group II introns. In Bartsia alpina (Velvet bells), this protein is Maturase K.